A 220-amino-acid chain; its full sequence is Probable GTP-binding protein EngB (220 aa).

One can recognise an EngB-type G domain in the interval 41–219; sequence DRSEVCFAGR…RAEIAALAML (179 aa). Residues 49–56, 76–80, 96–99, 164–167, and 197–200 contribute to the GTP site; these read GRSNVGKS, GRTRE, DLPG, TKVD, and MTSA. Positions 56 and 78 each coordinate Mg(2+).

It belongs to the TRAFAC class TrmE-Era-EngA-EngB-Septin-like GTPase superfamily. EngB GTPase family. It depends on Mg(2+) as a cofactor.

Its function is as follows. Necessary for normal cell division and for the maintenance of normal septation. This chain is Probable GTP-binding protein EngB, found in Hyphomonas neptunium (strain ATCC 15444).